The primary structure comprises 1271 residues: ATP-dependent helicase/nuclease subunit A (1271 aa).

The 474-residue stretch at 3–476 (TKWTEEQELA…IMLYKNFRSR (474 aa)) folds into the UvrD-like helicase ATP-binding domain. Residue 24–31 (AAAGSGKT) coordinates ATP. The 297-residue stretch at 528–824 (IENLKVAGDI…RIMSIHKSKG (297 aa)) folds into the UvrD-like helicase C-terminal domain.

This sequence belongs to the helicase family. AddA subfamily. Heterodimer of AddA and AddB/RexB. The cofactor is Mg(2+).

The enzyme catalyses Couples ATP hydrolysis with the unwinding of duplex DNA by translocating in the 3'-5' direction.. It carries out the reaction ATP + H2O = ADP + phosphate + H(+). In terms of biological role, the heterodimer acts as both an ATP-dependent DNA helicase and an ATP-dependent, dual-direction single-stranded exonuclease. Recognizes the chi site generating a DNA molecule suitable for the initiation of homologous recombination. The AddA nuclease domain is required for chi fragment generation; this subunit has the helicase and 3' -&gt; 5' nuclease activities. The chain is ATP-dependent helicase/nuclease subunit A from Clostridium perfringens (strain ATCC 13124 / DSM 756 / JCM 1290 / NCIMB 6125 / NCTC 8237 / Type A).